The chain runs to 400 residues: Phosphoglycerate kinase (400 aa).

Substrate is bound by residues 24 to 26 (DFN), Arg-40, 63 to 66 (HFGR), Arg-121, and Arg-154. Residues Lys-205, Gly-296, Glu-327, and 356–359 (GGDS) contribute to the ATP site.

It belongs to the phosphoglycerate kinase family. Monomer.

Its subcellular location is the cytoplasm. The enzyme catalyses (2R)-3-phosphoglycerate + ATP = (2R)-3-phospho-glyceroyl phosphate + ADP. It functions in the pathway carbohydrate degradation; glycolysis; pyruvate from D-glyceraldehyde 3-phosphate: step 2/5. This chain is Phosphoglycerate kinase, found in Nostoc punctiforme (strain ATCC 29133 / PCC 73102).